The chain runs to 1025 residues: MKFFALFIYRPVATILLSVAITLCGILGFRMLPVAPLPQVDFPVIMVSASLPGASPETMASSVATPLERSLGRIAGVSEMTSSSSLGSTRIILQFDFDRDINGAARDVQAAINAAQSLLPSGMPSRPTYRKANPSDAPIMILTLTSDTYSQGELYDFASTQLAPTISQIDGVGDVDVGGSSLPAVRVGLNPQALFNQGVSLDDVRTAISNANVRKPQGALEDGTHRWQIQTNDELKTAAEYQPLIIHYNNGGAVRLGDVATVTDSVQDVRNAGMTNAKPAILLMIRKLPEANIIQTVDSIRARLPELQSTIPAAIDLQIAQDRSPTIRASLEEVEQTLIISVALVILVVFLFLRSGRATIIPAVAVPVSLIGTFAAMYLCGFSLNNLSLMALTIATGFVVDDAIVVLENIARHLEAGMKPLQAALQGTREVGFTVLSMSLSLVAVFLPLLLMGGLPGRLLREFAVTLSVAIGISLLVSLTLTPMMCGWMLKASKPREQKRLRGFGRMLVALQQGYGKSLKWVLNHTRLVGVVLLGTIALNIWLYISIPKTFFPEQDTGVLMGGIQADQSISFQAMRGKLQDFMKIIRDDPAVDNVTGFTGGSRVNSGMMFITLKPRGERSETAQQIIDRLRKKLAKEPGANLFLMAVQDIRVGGRQANASYQYTLLSDDLAALREWEPKIRKKLATLPELADVNSDQEDNGAEMNLIYDRDTMARLGIDVQAANSLLNNAFGQRQISTIYQPMNQYKVVMEVDPRYTQDISALEKMFVINNEGKAIPLSYFAKWQPANAPLSVNHQGLSAASTISFNLPTGKSLSDASAAIDRAMTQLGVPSTVRGSFAGTAQVFQETMNSQVILIIAAIATVYIVLGILYESYVHPLTILSTLPSAGVGALLALQLFNAPFSLIALIGIMLLIGIVKKNAIMMVYFALEAQRHGNLTPQEAIFQACLLRFRPIMMTTLAALFGALPLVLSGGDGSELRQPLGITIVGGLVMSQLLTLYTTPVVYLFFDRLRLRFSRKPKQAVTE.

12 helical membrane-spanning segments follow: residues 3–23 (FFAL…AITL), 333–353 (EVEQ…FLFL), 360–380 (IIPA…MYLC), 387–407 (LSLM…IVVL), 431–451 (VGFT…PLLL), 463–483 (FAVT…TLTP), 528–548 (LVGV…ISIP), 853–873 (VILI…LYES), 875–895 (VHPL…LLAL), 897–917 (LFNA…IGIV), 953–973 (PIMM…LSGG), and 984–1004 (ITIV…TPVV).

This sequence belongs to the resistance-nodulation-cell division (RND) (TC 2.A.6) family. MdtC subfamily. Part of a tripartite efflux system composed of MdtA, MdtB and MdtC. MdtC forms a heteromultimer with MdtB.

It is found in the cell inner membrane. Its function is as follows. The MdtABC tripartite complex confers resistance against novobiocin and deoxycholate. The protein is Multidrug resistance protein MdtC of Escherichia coli O1:K1 / APEC.